A 338-amino-acid chain; its full sequence is MVSMTASSGRRVLLAAPRGYCAGVDRAVIAVEKALEQYGAPIYVRHEIVHNKYVVQTLERKGAIFVERTAEVPEGAIVMFSAHGVAPVVHEEAARGKLATIDATCPLVTKVHKEAVRFANEDFDILLIGHEGHEEVIGTSGEAPEHITLVDGPGDVAKVEVRDPSKVVWLSQTTLSVDETMETVDALKEKFPQLISPPSDDICYATQNRQLAVKQMGEEADLVIVVGSRNSSNSVRLVEVAKLAGARDAYLVDFADEIDEAWLEGVSTVGVTSGASVPEILVEQVLEWLSQRGFEDVEIVKAAEESITFSLPKELRRDLRAEAAALVEQRTGNGPSAE.

A [4Fe-4S] cluster-binding site is contributed by Cys21. The (2E)-4-hydroxy-3-methylbut-2-enyl diphosphate site is built by His50 and His83. His50 and His83 together coordinate dimethylallyl diphosphate. Isopentenyl diphosphate-binding residues include His50 and His83. Cys105 lines the [4Fe-4S] cluster pocket. His133 lines the (2E)-4-hydroxy-3-methylbut-2-enyl diphosphate pocket. His133 provides a ligand contact to dimethylallyl diphosphate. His133 contributes to the isopentenyl diphosphate binding site. Glu135 serves as the catalytic Proton donor. Residue Thr173 participates in (2E)-4-hydroxy-3-methylbut-2-enyl diphosphate binding. Position 203 (Cys203) interacts with [4Fe-4S] cluster. (2E)-4-hydroxy-3-methylbut-2-enyl diphosphate-binding residues include Ser231, Ser232, Asn233, and Ser276. Dimethylallyl diphosphate contacts are provided by Ser231, Ser232, Asn233, and Ser276. 4 residues coordinate isopentenyl diphosphate: Ser231, Ser232, Asn233, and Ser276.

It belongs to the IspH family. The cofactor is [4Fe-4S] cluster.

The catalysed reaction is isopentenyl diphosphate + 2 oxidized [2Fe-2S]-[ferredoxin] + H2O = (2E)-4-hydroxy-3-methylbut-2-enyl diphosphate + 2 reduced [2Fe-2S]-[ferredoxin] + 2 H(+). The enzyme catalyses dimethylallyl diphosphate + 2 oxidized [2Fe-2S]-[ferredoxin] + H2O = (2E)-4-hydroxy-3-methylbut-2-enyl diphosphate + 2 reduced [2Fe-2S]-[ferredoxin] + 2 H(+). It functions in the pathway isoprenoid biosynthesis; dimethylallyl diphosphate biosynthesis; dimethylallyl diphosphate from (2E)-4-hydroxy-3-methylbutenyl diphosphate: step 1/1. Its pathway is isoprenoid biosynthesis; isopentenyl diphosphate biosynthesis via DXP pathway; isopentenyl diphosphate from 1-deoxy-D-xylulose 5-phosphate: step 6/6. Functionally, catalyzes the conversion of 1-hydroxy-2-methyl-2-(E)-butenyl 4-diphosphate (HMBPP) into a mixture of isopentenyl diphosphate (IPP) and dimethylallyl diphosphate (DMAPP). Acts in the terminal step of the DOXP/MEP pathway for isoprenoid precursor biosynthesis. The protein is 4-hydroxy-3-methylbut-2-enyl diphosphate reductase of Streptomyces avermitilis (strain ATCC 31267 / DSM 46492 / JCM 5070 / NBRC 14893 / NCIMB 12804 / NRRL 8165 / MA-4680).